The following is a 338-amino-acid chain: tRNA N6-adenosine threonylcarbamoyltransferase (338 aa).

2 residues coordinate Fe cation: histidine 112 and histidine 116. Substrate-binding positions include 135-139 (LVSGG), aspartate 168, glycine 181, and asparagine 273. Aspartate 301 is a Fe cation binding site.

The protein belongs to the KAE1 / TsaD family. The cofactor is Fe(2+).

The protein localises to the cytoplasm. The enzyme catalyses L-threonylcarbamoyladenylate + adenosine(37) in tRNA = N(6)-L-threonylcarbamoyladenosine(37) in tRNA + AMP + H(+). Required for the formation of a threonylcarbamoyl group on adenosine at position 37 (t(6)A37) in tRNAs that read codons beginning with adenine. Is involved in the transfer of the threonylcarbamoyl moiety of threonylcarbamoyl-AMP (TC-AMP) to the N6 group of A37, together with TsaE and TsaB. TsaD likely plays a direct catalytic role in this reaction. This is tRNA N6-adenosine threonylcarbamoyltransferase from Buchnera aphidicola subsp. Baizongia pistaciae (strain Bp).